The chain runs to 392 residues: CCA-adding enzyme (392 aa).

The ATP site is built by S45 and K48. S45 and K48 together coordinate CTP. Positions 55, 57, and 106 each coordinate Mg(2+). ATP contacts are provided by H129, K148, and Y157. CTP-binding residues include H129, K148, and Y157.

Belongs to the tRNA nucleotidyltransferase/poly(A) polymerase family. Archaeal CCA-adding enzyme subfamily. In terms of assembly, homodimer. The cofactor is Mg(2+).

The enzyme catalyses a tRNA precursor + 2 CTP + ATP = a tRNA with a 3' CCA end + 3 diphosphate. The catalysed reaction is a tRNA with a 3' CCA end + 2 CTP + ATP = a tRNA with a 3' CCACCA end + 3 diphosphate. In terms of biological role, catalyzes the addition and repair of the essential 3'-terminal CCA sequence in tRNAs without using a nucleic acid template. Adds these three nucleotides in the order of C, C, and A to the tRNA nucleotide-73, using CTP and ATP as substrates and producing inorganic pyrophosphate. tRNA 3'-terminal CCA addition is required both for tRNA processing and repair. Also involved in tRNA surveillance by mediating tandem CCA addition to generate a CCACCA at the 3' terminus of unstable tRNAs. While stable tRNAs receive only 3'-terminal CCA, unstable tRNAs are marked with CCACCA and rapidly degraded. This Nanoarchaeum equitans (strain Kin4-M) protein is CCA-adding enzyme.